A 355-amino-acid polypeptide reads, in one-letter code: Peptide chain release factor 1 (355 aa).

Gln229 is subject to N5-methylglutamine. The interval 280 to 299 is disordered; sequence LDRERSAARKGQVGSGDRSE.

Belongs to the prokaryotic/mitochondrial release factor family. Post-translationally, methylated by PrmC. Methylation increases the termination efficiency of RF1.

Its subcellular location is the cytoplasm. Its function is as follows. Peptide chain release factor 1 directs the termination of translation in response to the peptide chain termination codons UAG and UAA. The protein is Peptide chain release factor 1 of Parvibaculum lavamentivorans (strain DS-1 / DSM 13023 / NCIMB 13966).